The sequence spans 362 residues: Phosphoserine aminotransferase (362 aa).

2 residues coordinate L-glutamate: Ser9 and Arg42. Pyridoxal 5'-phosphate-binding positions include 76-77 (GR), Trp102, Thr153, Asp174, and Gln197. An N6-(pyridoxal phosphate)lysine modification is found at Lys198. Residue 239-240 (NT) participates in pyridoxal 5'-phosphate binding.

The protein belongs to the class-V pyridoxal-phosphate-dependent aminotransferase family. SerC subfamily. Homodimer. Requires pyridoxal 5'-phosphate as cofactor.

It localises to the cytoplasm. It carries out the reaction O-phospho-L-serine + 2-oxoglutarate = 3-phosphooxypyruvate + L-glutamate. The enzyme catalyses 4-(phosphooxy)-L-threonine + 2-oxoglutarate = (R)-3-hydroxy-2-oxo-4-phosphooxybutanoate + L-glutamate. Its pathway is amino-acid biosynthesis; L-serine biosynthesis; L-serine from 3-phospho-D-glycerate: step 2/3. It participates in cofactor biosynthesis; pyridoxine 5'-phosphate biosynthesis; pyridoxine 5'-phosphate from D-erythrose 4-phosphate: step 3/5. Catalyzes the reversible conversion of 3-phosphohydroxypyruvate to phosphoserine and of 3-hydroxy-2-oxo-4-phosphonooxybutanoate to phosphohydroxythreonine. This chain is Phosphoserine aminotransferase, found in Escherichia coli O7:K1 (strain IAI39 / ExPEC).